Here is a 426-residue protein sequence, read N- to C-terminus: Mothers against decapentaplegic homolog 7 (426 aa).

Positions 14–42 (WRSRAPGGEDEEEGVGGGGGGGELRGEGA) are disordered. N6-acetyllysine; alternate occurs at positions 64 and 70. Glycyl lysine isopeptide (Lys-Gly) (interchain with G-Cter in ubiquitin); alternate cross-links involve residues lysine 64 and lysine 70. The MH1 domain occupies 64–207 (KAVRGAKGHH…LSRLCELESP (144 aa)). Basic residues predominate over residues 67–76 (RGAKGHHHPH). The interval 67–87 (RGAKGHHHPHPPTSGAGAAGG) is disordered. Positions 125, 180, 192, and 197 each coordinate Zn(2+). A PY-motif motif is present at residues 208–211 (PPPY). The important for interaction with SMURF2 stretch occupies residues 208–217 (PPPYSRYPMD). At serine 249 the chain carries Phosphoserine. Positions 261–426 (WCVVAYWEEK…CWLEVIFNSR (166 aa)) constitute an MH2 domain.

The protein belongs to the dwarfin/SMAD family. Interacts with COPS5. Interacts with STAMBP. Interacts with PPP1R15A. Interacts with NEDD4L. Interacts with RNF111, AXIN1 and AXIN2. Interacts with ACVR1B, SMURF1, SMURF2 and TGFBR1; SMAD7 recruits SMURF1 and SMURF2 to the TGF-beta receptor and regulates its degradation. Interacts with WWP1. Interacts with PDPK1 (via PH domain). Ubiquitinated by WWP1. Interacts with TSC22D1/TSC-22; the interaction requires TGF-beta and the interaction is inhibited by TGFBR1. In terms of processing, phosphorylation on Ser-249 does not affect its stability, nuclear localization or inhibitory function in TGFB signaling; however it affects its ability to regulate transcription. Phosphorylated by PDPK1. Post-translationally, ubiquitinated by WWP1. Polyubiquitinated by RNF111, which is enhanced by AXIN1 and promotes proteasomal degradation. In response to TGF-beta, ubiquitinated by SMURF1; which promotes its degradation. Ubiquitinated by ARK2C, promoting proteasomal degradation, leading to enhance the BMP-Smad signaling. Acetylation prevents ubiquitination and degradation mediated by SMURF1. Ubiquitous in various organs, with higher levels in brain and kidney.

It localises to the nucleus. The protein localises to the cytoplasm. In terms of biological role, antagonist of signaling by TGF-beta (transforming growth factor) type 1 receptor superfamily members; has been shown to inhibit TGF-beta (Transforming growth factor) and activin signaling by associating with their receptors thus preventing SMAD2 access. Functions as an adapter to recruit SMURF2 to the TGF-beta receptor complex. Also acts by recruiting the PPP1R15A-PP1 complex to TGFBR1, which promotes its dephosphorylation. Positively regulates PDPK1 kinase activity by stimulating its dissociation from the 14-3-3 protein YWHAQ which acts as a negative regulator. The chain is Mothers against decapentaplegic homolog 7 (Smad7) from Mus musculus (Mouse).